Reading from the N-terminus, the 400-residue chain is 3-hydroxykynurenine transaminase (400 aa).

Residues 43-44 (SN) are binds to and confers specificity for 3-hydroxykynurenine; shared with dimeric partner. Pyridoxal 5'-phosphate contacts are provided by residues 77 to 79 (SAH), Ser-154, and Gln-204. Position 154 (Ser-154) interacts with substrate. Residue Lys-205 is modified to N6-(pyridoxal phosphate)lysine. Pyridoxal 5'-phosphate contacts are provided by Tyr-256 and Thr-259. A substrate-binding site is contributed by Arg-356.

Belongs to the class-V pyridoxal-phosphate-dependent aminotransferase family. As to quaternary structure, homodimer. May form homotetramer. It depends on pyridoxal 5'-phosphate as a cofactor.

It is found in the peroxisome. It catalyses the reaction glyoxylate + L-alanine = glycine + pyruvate. It carries out the reaction L-kynurenine + glyoxylate = kynurenate + glycine + H2O. The catalysed reaction is 3-hydroxy-L-kynurenine + glyoxylate = xanthurenate + glycine + H2O. The enzyme catalyses 3-hydroxy-L-kynurenine + pyruvate = xanthurenate + L-alanine + H2O. It catalyses the reaction L-kynurenine + pyruvate = kynurenate + L-alanine + H2O. It carries out the reaction 2-oxobutanoate + L-alanine = (2S)-2-aminobutanoate + pyruvate. The catalysed reaction is L-phenylalanine + pyruvate = 3-phenylpyruvate + L-alanine. The enzyme catalyses L-serine + pyruvate = 3-hydroxypyruvate + L-alanine. It catalyses the reaction L-cysteine + pyruvate = 2-oxo-3-sulfanylpropanoate + L-alanine. It carries out the reaction 3-hydroxy-L-kynurenine + oxaloacetate = 4-(2-amino-3-hydroxyphenyl)-2,4-dioxobutanoate + L-aspartate. The catalysed reaction is 3-hydroxy-L-kynurenine + 3-phenylpyruvate = 4-(2-amino-3-hydroxyphenyl)-2,4-dioxobutanoate + L-phenylalanine. The enzyme catalyses L-kynurenine + oxaloacetate = 4-(2-aminophenyl)-2,4-dioxobutanoate + L-aspartate. It catalyses the reaction 3-phenylpyruvate + L-kynurenine = 4-(2-aminophenyl)-2,4-dioxobutanoate + L-phenylalanine. It functions in the pathway amino-acid degradation; L-kynurenine degradation; kynurenate from L-kynurenine: step 1/2. Catalyzes the pyridoxal 5'-phosphate-dependent transamination of both 3-hydroxykynurenine and L-kynurenine to xanthurenic acid and kynurenic acid, respectively, preferentially using the alpha-ketoacid pyruvate, glyoxylate or oxaloacetate as the amino group acceptor. The affinity and catalytic efficiency for 3-hydroxykynurenine is higher than for L-kynurenine. Involved in the detoxification of cytotoxic metabolite 3-hydroxykynurenine generated by the hydroxylation of L-kynurenine, an intermediate in the tryptophan catabolism pathway. Also catalyzes, although with a lesser efficiency, the transamination of alanine with glyoxylate as an amino group acceptor. May play a role in the detoxification of glyoxylate, a toxic plant metabolite from the diet. The chain is 3-hydroxykynurenine transaminase from Aedes aegypti (Yellowfever mosquito).